Reading from the N-terminus, the 479-residue chain is PRAME family member 18 (479 aa).

One copy of the LRR 1 repeat lies at 15-38; that stretch reads QSLLRDQALAISVLDELPRELFPP. The stretch at 97-124 is one LRR 1; degenerate repeat; the sequence is RWKLQVLEMRDVDENFWTIWSGARLLSC. One copy of the LRR 2; degenerate repeat lies at 179 to 203; sequence HLCCTKVVNYSMSILNFRNILETVY. The LRR 3; degenerate repeat unit spans residues 204 to 230; that stretch reads PDSIQVLEIWNMCWLCMIVEFSRYLSQ. An LRR 4; degenerate repeat occupies 231-265; it reads MRNLRKLFISDGCRYLLSSDSQEQLVAEFSSVLLR. LRR repeat units follow at residues 266-291, 292-323, 324-342, 348-375, and 376-400; these read LENL…IRCL, RSPL…SQLK, QLNL…PLRA, AATL…ALSR, and CSNL…LLRH.

It belongs to the PRAME family.

The protein is PRAME family member 18 of Homo sapiens (Human).